The chain runs to 475 residues: Probable UDP-N-acetylglucosamine pyrophosphorylase (475 aa).

The Substrate binding signature appears at 103–106; it reads LAGG. UTP-binding positions include 103-106, K117, Q194, and G220; that span reads LAGG. Residue N221 coordinates substrate. D251 is a UTP binding site. The Substrate binding signature appears at 301–302; sequence EY. K378 lines the UTP pocket. S405 is modified (phosphoserine). K410 serves as a coordination point for substrate.

It belongs to the UDPGP type 1 family.

It localises to the cytoplasm. The protein resides in the nucleus. It carries out the reaction N-acetyl-alpha-D-glucosamine 1-phosphate + UTP + H(+) = UDP-N-acetyl-alpha-D-glucosamine + diphosphate. It participates in nucleotide-sugar biosynthesis; UDP-N-acetyl-alpha-D-glucosamine biosynthesis; UDP-N-acetyl-alpha-D-glucosamine from N-acetyl-alpha-D-glucosamine 1-phosphate: step 1/1. The chain is Probable UDP-N-acetylglucosamine pyrophosphorylase (uap1) from Schizosaccharomyces pombe (strain 972 / ATCC 24843) (Fission yeast).